A 648-amino-acid chain; its full sequence is Beta-glucuronidase (648 aa).

Positions 1-19 are cleaved as a signal peptide; that stretch reads GLAMAWAVLGPLLWGCALA. Residues N170, N269, and N417 are each glycosylated (N-linked (GlcNAc...) asparagine). E448 functions as the Proton donor in the catalytic mechanism. N628 carries N-linked (GlcNAc...) asparagine glycosylation.

This sequence belongs to the glycosyl hydrolase 2 family. Homotetramer.

It is found in the lysosome. It carries out the reaction a beta-D-glucuronoside + H2O = D-glucuronate + an alcohol. With respect to regulation, inhibited by L-aspartic acid. Plays an important role in the degradation of dermatan and keratan sulfates. The polypeptide is Beta-glucuronidase (GUSB) (Chlorocebus aethiops (Green monkey)).